Reading from the N-terminus, the 870-residue chain is Patatin-like phospholipase domain-containing protein NCU11180 (870 aa).

Disordered stretches follow at residues 1 to 24 and 131 to 158; these read MADD…PPEA and KVIK…KGVA. Over residues 131–141 the composition is skewed to basic and acidic residues; it reads KVIKTDRDEKR. Residues 142-155 are compositionally biased toward basic residues; it reads NKRGKDRKNKKPRK. The helical transmembrane segment at 183 to 203 threads the bilayer; it reads WPFLLFVSFWIVGLGMAYLAT. The interval 281 to 320 is disordered; sequence EEVERELESQSQNSDSGVASGEETSNTKAGGGNNGNDKKT. Polar residues predominate over residues 289–308; it reads SQSQNSDSGVASGEETSNTK. In terms of domain architecture, PNPLA spans 399–590; the sequence is LCLSGGATFA…RTDIPIKSLN (192 aa). The GXSXG motif lies at 430 to 434; that stretch reads GTSGG. Ser-432 acts as the Nucleophile in catalysis. Asp-577 (proton acceptor) is an active-site residue. Disordered stretches follow at residues 735–786 and 804–870; these read RRET…DRRG and GREG…HSRT. A compositionally biased stretch (acidic residues) spans 818–834; that stretch reads TEDELTMTELEGEDDDG.

The protein belongs to the PLPL family.

It is found in the membrane. Probable lipid hydrolase. In Neurospora crassa (strain ATCC 24698 / 74-OR23-1A / CBS 708.71 / DSM 1257 / FGSC 987), this protein is Patatin-like phospholipase domain-containing protein NCU11180.